The chain runs to 391 residues: Ferrochelatase (391 aa).

His-196 and Glu-281 together coordinate Fe cation.

It belongs to the ferrochelatase family.

The protein localises to the cytoplasm. It catalyses the reaction heme b + 2 H(+) = protoporphyrin IX + Fe(2+). Its pathway is porphyrin-containing compound metabolism; protoheme biosynthesis; protoheme from protoporphyrin-IX: step 1/1. Its function is as follows. Catalyzes the ferrous insertion into protoporphyrin IX. The protein is Ferrochelatase of Prochlorococcus marinus (strain MIT 9215).